A 213-amino-acid chain; its full sequence is LexA repressor (213 aa).

The H-T-H motif DNA-binding region spans 29 to 49 (RAEIAQALGFRSPNAAEDHLK). Residues Ser131 and Lys168 each act as for autocatalytic cleavage activity in the active site.

This sequence belongs to the peptidase S24 family. As to quaternary structure, homodimer.

The enzyme catalyses Hydrolysis of Ala-|-Gly bond in repressor LexA.. In terms of biological role, represses a number of genes involved in the response to DNA damage (SOS response), including recA and lexA. In the presence of single-stranded DNA, RecA interacts with LexA causing an autocatalytic cleavage which disrupts the DNA-binding part of LexA, leading to derepression of the SOS regulon and eventually DNA repair. This chain is LexA repressor, found in Bordetella avium (strain 197N).